The primary structure comprises 698 residues: Serine/threonine-protein kinase Nek8 (698 aa).

The 255-residue stretch at 4–258 (YERIRVVGRG…LSHIMAQPLC (255 aa)) folds into the Protein kinase domain. ATP contacts are provided by residues 10-18 (VGRGAFGIV) and Lys-33. The active-site Proton acceptor is the Asp-128. Thr-162 is modified (phosphothreonine; by autocatalysis). Residues 281 to 307 (LTPGTPMAPGSTGSRATSARCRGVPRG) are disordered. 5 RCC1 repeats span residues 415–466 (RGII…ALSA), 467–518 (DGEL…ILTS), 520–571 (GRVL…TLLC), 585–636 (SGAC…AIGA), and 638–689 (GEVY…LAVR).

This sequence belongs to the protein kinase superfamily. NEK Ser/Thr protein kinase family. NIMA subfamily. In terms of assembly, interacts with PKD2; may regulate PKD2 targeting to the cilium. Interacts with ANKS6. Component of a complex containing at least ANKS6, INVS, NEK8 and NPHP3. ANKS6 may organize complex assembly by linking INVS and NPHP3 to NEK8 and INVS may target it to the proximal ciliary axoneme. Interacts with ANKS3. Requires Mg(2+) as cofactor.

It localises to the cytoplasm. Its subcellular location is the cytoskeleton. The protein localises to the cell projection. It is found in the cilium. The protein resides in the cilium axoneme. It localises to the microtubule organizing center. Its subcellular location is the centrosome. It carries out the reaction L-seryl-[protein] + ATP = O-phospho-L-seryl-[protein] + ADP + H(+). The catalysed reaction is L-threonyl-[protein] + ATP = O-phospho-L-threonyl-[protein] + ADP + H(+). Required for renal tubular integrity. May regulate local cytoskeletal structure in kidney tubule epithelial cells. May regulate ciliary biogenesis through targeting of proteins to the cilia. Plays a role in organogenesis and is involved in the regulation of the Hippo signaling pathway. This Rattus norvegicus (Rat) protein is Serine/threonine-protein kinase Nek8 (Nek8).